We begin with the raw amino-acid sequence, 229 residues long: RNA pyrophosphohydrolase (229 aa).

The Nudix hydrolase domain maps to 6 to 149; that stretch reads GFRPNVGIIL…KRGVYEMALT (144 aa). A Nudix box motif is present at residues 38 to 59; it reads GGIDRGETPEQAMFRELHEEVG. Residues 168–229 are disordered; it reads SGMRPREAHE…QVLHPDPGKA (62 aa).

It belongs to the Nudix hydrolase family. RppH subfamily. A divalent metal cation serves as cofactor.

Accelerates the degradation of transcripts by removing pyrophosphate from the 5'-end of triphosphorylated RNA, leading to a more labile monophosphorylated state that can stimulate subsequent ribonuclease cleavage. In Delftia acidovorans (strain DSM 14801 / SPH-1), this protein is RNA pyrophosphohydrolase.